A 201-amino-acid chain; its full sequence is Peptide deformylase 2 (201 aa).

Cysteine 121 and histidine 163 together coordinate Fe cation. Glutamate 164 is an active-site residue. Histidine 167 contributes to the Fe cation binding site.

It belongs to the polypeptide deformylase family. It depends on Fe(2+) as a cofactor.

It carries out the reaction N-terminal N-formyl-L-methionyl-[peptide] + H2O = N-terminal L-methionyl-[peptide] + formate. Functionally, removes the formyl group from the N-terminal Met of newly synthesized proteins. Requires at least a dipeptide for an efficient rate of reaction. N-terminal L-methionine is a prerequisite for activity but the enzyme has broad specificity at other positions. In Prochlorococcus marinus (strain MIT 9313), this protein is Peptide deformylase 2.